Here is a 658-residue protein sequence, read N- to C-terminus: UvrABC system protein B (658 aa).

In terms of domain architecture, Helicase ATP-binding spans 26–413 (EGINSGKKKQ…SPEVIEQIIR (388 aa)). ATP is bound at residue 39-46 (GATGTGKT). The short motif at 92–115 (YYDYYQPEAYVPQTDTFIEKDAQI) is the Beta-hairpin element. A Helicase C-terminal domain is found at 430 to 596 (QIDDLLGEIQ…TIQKGVRDVI (167 aa)). One can recognise a UVR domain in the interval 622 to 657 (EKTIAKMEAEMKEAAKALDFERAAELRDLLLELKAE).

This sequence belongs to the UvrB family. As to quaternary structure, forms a heterotetramer with UvrA during the search for lesions. Interacts with UvrC in an incision complex.

It is found in the cytoplasm. Its function is as follows. The UvrABC repair system catalyzes the recognition and processing of DNA lesions. A damage recognition complex composed of 2 UvrA and 2 UvrB subunits scans DNA for abnormalities. Upon binding of the UvrA(2)B(2) complex to a putative damaged site, the DNA wraps around one UvrB monomer. DNA wrap is dependent on ATP binding by UvrB and probably causes local melting of the DNA helix, facilitating insertion of UvrB beta-hairpin between the DNA strands. Then UvrB probes one DNA strand for the presence of a lesion. If a lesion is found the UvrA subunits dissociate and the UvrB-DNA preincision complex is formed. This complex is subsequently bound by UvrC and the second UvrB is released. If no lesion is found, the DNA wraps around the other UvrB subunit that will check the other stand for damage. The chain is UvrABC system protein B from Bacillus cereus (strain ATCC 14579 / DSM 31 / CCUG 7414 / JCM 2152 / NBRC 15305 / NCIMB 9373 / NCTC 2599 / NRRL B-3711).